The chain runs to 396 residues: Acetylornithine aminotransferase 2 (396 aa).

Pyridoxal 5'-phosphate contacts are provided by residues 102–103 (GA) and Phe-134. A N(2)-acetyl-L-ornithine-binding site is contributed by Arg-137. Position 219–222 (219–222 (DEVQ)) interacts with pyridoxal 5'-phosphate. The residue at position 248 (Lys-248) is an N6-(pyridoxal phosphate)lysine. Pyridoxal 5'-phosphate is bound at residue Thr-276.

Belongs to the class-III pyridoxal-phosphate-dependent aminotransferase family. ArgD subfamily. As to quaternary structure, homodimer. Pyridoxal 5'-phosphate serves as cofactor.

The protein resides in the cytoplasm. The catalysed reaction is N(2)-acetyl-L-ornithine + 2-oxoglutarate = N-acetyl-L-glutamate 5-semialdehyde + L-glutamate. It functions in the pathway amino-acid biosynthesis; L-arginine biosynthesis; N(2)-acetyl-L-ornithine from L-glutamate: step 4/4. In Bordetella parapertussis (strain 12822 / ATCC BAA-587 / NCTC 13253), this protein is Acetylornithine aminotransferase 2.